The primary structure comprises 403 residues: Arginine biosynthesis bifunctional protein ArgJ (403 aa).

Residues 1 to 11 (MVQSVLSSTSH) show a composition bias toward polar residues. The disordered stretch occupies residues 1 to 21 (MVQSVLSSTSHGSERADMSAA). Substrate is bound by residues threonine 161, lysine 183, threonine 194, glutamate 273, asparagine 398, and threonine 403. The active-site Nucleophile is threonine 194.

It belongs to the ArgJ family. In terms of assembly, heterotetramer of two alpha and two beta chains.

Its subcellular location is the cytoplasm. It catalyses the reaction N(2)-acetyl-L-ornithine + L-glutamate = N-acetyl-L-glutamate + L-ornithine. The enzyme catalyses L-glutamate + acetyl-CoA = N-acetyl-L-glutamate + CoA + H(+). It participates in amino-acid biosynthesis; L-arginine biosynthesis; L-ornithine and N-acetyl-L-glutamate from L-glutamate and N(2)-acetyl-L-ornithine (cyclic): step 1/1. It functions in the pathway amino-acid biosynthesis; L-arginine biosynthesis; N(2)-acetyl-L-ornithine from L-glutamate: step 1/4. Its function is as follows. Catalyzes two activities which are involved in the cyclic version of arginine biosynthesis: the synthesis of N-acetylglutamate from glutamate and acetyl-CoA as the acetyl donor, and of ornithine by transacetylation between N(2)-acetylornithine and glutamate. This chain is Arginine biosynthesis bifunctional protein ArgJ, found in Rhodococcoides fascians (Rhodococcus fascians).